Here is a 201-residue protein sequence, read N- to C-terminus: ATP-dependent Clp protease proteolytic subunit (201 aa).

The active-site Nucleophile is the serine 98. Histidine 123 is an active-site residue.

It belongs to the peptidase S14 family. As to quaternary structure, fourteen ClpP subunits assemble into 2 heptameric rings which stack back to back to give a disk-like structure with a central cavity, resembling the structure of eukaryotic proteasomes.

It localises to the cytoplasm. It catalyses the reaction Hydrolysis of proteins to small peptides in the presence of ATP and magnesium. alpha-casein is the usual test substrate. In the absence of ATP, only oligopeptides shorter than five residues are hydrolyzed (such as succinyl-Leu-Tyr-|-NHMec, and Leu-Tyr-Leu-|-Tyr-Trp, in which cleavage of the -Tyr-|-Leu- and -Tyr-|-Trp bonds also occurs).. In terms of biological role, cleaves peptides in various proteins in a process that requires ATP hydrolysis. Has a chymotrypsin-like activity. Plays a major role in the degradation of misfolded proteins. In Rickettsia typhi (strain ATCC VR-144 / Wilmington), this protein is ATP-dependent Clp protease proteolytic subunit.